The sequence spans 149 residues: Transcription antitermination protein NusB (149 aa).

It belongs to the NusB family.

Functionally, involved in transcription antitermination. Required for transcription of ribosomal RNA (rRNA) genes. Binds specifically to the boxA antiterminator sequence of the ribosomal RNA (rrn) operons. The sequence is that of Transcription antitermination protein NusB from Acinetobacter baumannii (strain AB307-0294).